The following is a 711-amino-acid chain: MLNPIVRKFQYGQHTVTLETGMMARQATAAVMVSMDDTAVFVTVVGQKKAKPGQDFFPLTVNYQERTYAAGRIPGSFFRREGRPSEGETLIARLIDRPIRPLFPEGFVNEVQVIATVVSVNPQVNPDIVAMIGASAALSLSGIPFNGPIGAARVGYINDQYVLNPTQDELKESKLDLVVAGTEAAVLMVESEAELLSEDQMLGAVVFGHEQQQVVIQNINELVKEAGKPRWDWQPEPVNEALNARVAALAEARLSDAYRITDKQERYAQVDVIKSETIATLLAEDETLDENELGEILHAIEKNVVRSRVLAGEPRIDGREKDMIRGLDVRTGVLPRTHGSALFTRGETQALVTATLGTARDAQVLDELMGERTDTFLFHYNFPPYSVGETGMVGSPKRREIGHGRLAKRGVLAVMPDMDKFPYTVRVVSEITESNGSSSMASVCGASLALMDAGVPIKAAVAGIAMGLVKEGDNYVVLSDILGDEDHLGDMDFKVAGSRDGISALQMDIKIEGITKEIMQVALNQAKGARLHILGVMEQAINAPRGDISEFAPRIHTIKINPDKIKDVIGKGGSVIRALTEETGTTIEIEDDGTVKIAATDGEKAKNAIRRIEEITAEIEVGRVYNGKVTRIVDFGAFVAIGGGKEGLVHISQIADKRVEKVTDYLQMGQEVPVKVLEVDRQGRIRLSIKEATEQSQPAAAPEAPAAEQGE.

Mg(2+) contacts are provided by D486 and D492. One can recognise a KH domain in the interval 553–612; that stretch reads PRIHTIKINPDKIKDVIGKGGSVIRALTEETGTTIEIEDDGTVKIAATDGEKAKNAIRRI. Residues 622–690 enclose the S1 motif domain; sequence GRVYNGKVTR…RQGRIRLSIK (69 aa). The disordered stretch occupies residues 689–711; the sequence is IKEATEQSQPAAAPEAPAAEQGE. The segment covering 694-711 has biased composition (low complexity); sequence EQSQPAAAPEAPAAEQGE.

It belongs to the polyribonucleotide nucleotidyltransferase family. As to quaternary structure, component of the RNA degradosome, which is a multiprotein complex involved in RNA processing and mRNA degradation. The cofactor is Mg(2+).

The protein localises to the cytoplasm. It carries out the reaction RNA(n+1) + phosphate = RNA(n) + a ribonucleoside 5'-diphosphate. Functionally, involved in mRNA degradation. Catalyzes the phosphorolysis of single-stranded polyribonucleotides processively in the 3'- to 5'-direction. The sequence is that of Polyribonucleotide nucleotidyltransferase from Escherichia fergusonii (strain ATCC 35469 / DSM 13698 / CCUG 18766 / IAM 14443 / JCM 21226 / LMG 7866 / NBRC 102419 / NCTC 12128 / CDC 0568-73).